The following is a 243-amino-acid chain: Retrotransposon Gag-like protein 6 (243 aa).

Positions 1–12 (MVQPRTSKTESP) are enriched in polar residues. The interval 1–22 (MVQPRTSKTESPASAPGASAQM) is disordered. Positions 29-69 (LTSLRLTNSALRREASTLRAEKANLTNMLESVMAELTLLRT) form a coiled coil. Disordered regions lie at residues 84-105 (SAIT…PEPF) and 218-243 (TGSC…GRNL). The segment covering 85–94 (AITSNGTRPM) has biased composition (polar residues).

This sequence belongs to the LDOC1 family. As to expression, widely expressed.

The polypeptide is Retrotransposon Gag-like protein 6 (Mus musculus (Mouse)).